Reading from the N-terminus, the 139-residue chain is uncharacterized protein (139 aa).

The 56-residue stretch at 8–63 (LRELRRARKLTVNQLAVYSGISSATISKIENGKRGTPKPATIKKLAAVLKVPYENL) folds into the HTH cro/C1-type domain. Positions 19-38 (VNQLAVYSGISSATISKIEN) form a DNA-binding region, H-T-H motif.

This is an uncharacterized protein from Bacillus subtilis (strain 168).